The sequence spans 467 residues: Proton extrusion protein PxcA (467 aa).

Over residues 146–161 the composition is skewed to polar residues; that stretch reads SQVRTTSSQPPENPSL. Disordered regions lie at residues 146 to 167 and 186 to 205; these read SQVRTTSSQPPENPSLTDALRT and PQLIKQRTEQSKKSRGKADT. The span at 191–203 shows a compositional bias: basic and acidic residues; it reads QRTEQSKKSRGKA. Helical transmembrane passes span 249-269, 352-372, 391-411, and 427-447; these read FILLIIIVPLLTHQLSKALIV, IFSVGAFIWLLLVSKPSIMVL, IIILFTDVFVGFHSPHGWEVI, and FIFLFIATFPVILDTIFKYWI.

It belongs to the CemA family.

Its subcellular location is the cell inner membrane. Functionally, required for H(+) efflux immediately after light irradiation to form a rapid H(+) concentration gradient across the thylakoid membranes. Together with PxcL, contributes to transient H(+) uptake following dark to light transition. The polypeptide is Proton extrusion protein PxcA (Nostoc sp. (strain PCC 7120 / SAG 25.82 / UTEX 2576)).